The primary structure comprises 260 residues: MKFLLVFALALATTSAFQHPASIFELREGRIINGYEAYTGLFPYQAGLDITLQDQRRVWCGGSLIDNKWILTAAHCVHDAVSVVVYLGSAVQYEGEAVVNSERIISHSMFNPDTYLNDVALIKIPHVEYTDNIQPIRLPSGEELNNKFENIWATVSGWGQSNTDTVILQYTYNLVIDNDRCAQEYPPGIIVESTICGDTCDGKSPCFGDSGGPFVLSDKNLLIGVVSFVSGAGCESGKPVGFSRVTSYMDWIQQNTGIIF.

Residues 1–16 form the signal peptide; the sequence is MKFLLVFALALATTSA. A propeptide spanning residues 17-30 is cleaved from the precursor; sequence FQHPASIFELREGR. The Peptidase S1 domain occupies 31–257; that stretch reads IINGYEAYTG…YMDWIQQNTG (227 aa). Cysteine 60 and cysteine 76 are joined by a disulfide. Catalysis depends on charge relay system residues histidine 75 and aspartate 118. 2 disulfides stabilise this stretch: cysteine 181-cysteine 196 and cysteine 206-cysteine 234. Residue serine 210 is the Charge relay system of the active site.

It belongs to the peptidase S1 family.

It localises to the secreted. The catalysed reaction is Hydrolysis of proteins including native collagen at Xaa-|-Ala bond leaving an N-terminal (75%) and a C-terminal (25%) fragment.. Inhibited by diisopropylfluorophosphate. In terms of biological role, this enzyme is a serine protease capable of degrading the native triple helix of collagen. Also cleaves the B chain of insulin at the 15-Leu-|-Try-16 and 22-Arg-|-Gly-23 bonds. Hydrolyzes casein, but not Px-Pro-Leu-Gly-Pro-DArg, BzArgNHPh, AcTyrNHPh, 2-naphthyl phosphate, 2-naphthyl butyrate, 2-naphthyl caprylate, 2-naphthyl myristate, L-leucine 2-2-naphthylamide, L-valine 2-naphthylamide, L-cysteine 2-naphthylamide or L-glutarylphenylalanine 2-naphthylamide. This is Collagenase from Hypoderma lineatum (Early cattle grub).